A 508-amino-acid chain; its full sequence is Putative adenosylhomocysteinase 3 (508 aa).

At S4 the chain carries Phosphoserine. Residues 24–81 (DQKQEFNKRPTKIGRRSLSRSISQSSTDSYSSAASYTDSSDDETSPRDKQQKNSKGSS) are disordered. Residues 32-41 (RPTKIGRRSL) are compositionally biased toward basic residues. Residues 42–61 (SRSISQSSTDSYSSAASYTD) are compositionally biased toward low complexity. Residues S46, S49, S52, and S55 each carry the phosphoserine modification. T133, D207, and E232 together coordinate substrate. 233 to 235 (SVT) contacts NAD(+). Substrate contacts are provided by K262 and D266. Residues N267, 298-303 (GEVGKG), E319, N354, 375-377 (IGH), and N422 contribute to the NAD(+) site.

It belongs to the adenosylhomocysteinase family. Homotetramer. Forms heteromultimers with AHCYL1 (via the C-terminal region). Interacts with ITPR1; with lower affinity than AHCYL1 and maybe via ITPR1. Interacts with SLC4A4. Interacts with ZCCHC4. NAD(+) serves as cofactor.

It localises to the cytoplasm. The protein resides in the microsome. It catalyses the reaction S-adenosyl-L-homocysteine + H2O = L-homocysteine + adenosine. It functions in the pathway amino-acid biosynthesis; L-homocysteine biosynthesis; L-homocysteine from S-adenosyl-L-homocysteine: step 1/1. Functionally, may regulate the electrogenic sodium/bicarbonate cotransporter SLC4A4 activity and Mg(2+)-sensitivity. On the contrary of its homolog AHCYL1, does not regulate ITPR1 sensitivity to inositol 1,4,5-trisphosphate. This Pongo abelii (Sumatran orangutan) protein is Putative adenosylhomocysteinase 3 (AHCYL2).